Reading from the N-terminus, the 110-residue chain is UPF0060 membrane protein Dtpsy_1668 (110 aa).

The next 4 membrane-spanning stretches (helical) occupy residues 7–27 (LALFLLTAVAEIVGCYLPWLW), 33–53 (SAWLLVPAAASLALFAWLLTL), 63–83 (AAYGGVYVAVALVWLWTVDGV), and 86–106 (GPWDWLGVSVTLCGMAIIAFA).

Belongs to the UPF0060 family.

The protein resides in the cell inner membrane. This is UPF0060 membrane protein Dtpsy_1668 from Acidovorax ebreus (strain TPSY) (Diaphorobacter sp. (strain TPSY)).